Reading from the N-terminus, the 200-residue chain is Probable nicotinate-nucleotide adenylyltransferase (200 aa).

The protein belongs to the NadD family.

The catalysed reaction is nicotinate beta-D-ribonucleotide + ATP + H(+) = deamido-NAD(+) + diphosphate. It participates in cofactor biosynthesis; NAD(+) biosynthesis; deamido-NAD(+) from nicotinate D-ribonucleotide: step 1/1. Functionally, catalyzes the reversible adenylation of nicotinate mononucleotide (NaMN) to nicotinic acid adenine dinucleotide (NaAD). The chain is Probable nicotinate-nucleotide adenylyltransferase from Clostridium botulinum (strain Eklund 17B / Type B).